A 219-amino-acid polypeptide reads, in one-letter code: Melanoma-associated antigen H1 (219 aa).

The span at M1–A13 shows a compositional bias: basic residues. A disordered region spans residues M1–F84. The MAGE domain occupies M1 to D198. The span at P44–T57 shows a compositional bias: acidic residues. Residues P58–A74 show a composition bias toward low complexity. A Phosphotyrosine modification is found at Y195.

The sequence is that of Melanoma-associated antigen H1 (MAGEH1) from Homo sapiens (Human).